The chain runs to 402 residues: Argininosuccinate synthase (402 aa).

ATP contacts are provided by residues 11–19 and Ala-39; that span reads AYSGGLDTS. Positions 90 and 95 each coordinate L-citrulline. Gly-120 provides a ligand contact to ATP. L-aspartate-binding residues include Thr-122, Asn-126, and Asp-127. Position 126 (Asn-126) interacts with L-citrulline. The L-citrulline site is built by Arg-130, Ser-179, Ser-188, Glu-264, and Tyr-276.

This sequence belongs to the argininosuccinate synthase family. Type 1 subfamily. Homotetramer.

Its subcellular location is the cytoplasm. It carries out the reaction L-citrulline + L-aspartate + ATP = 2-(N(omega)-L-arginino)succinate + AMP + diphosphate + H(+). Its pathway is amino-acid biosynthesis; L-arginine biosynthesis; L-arginine from L-ornithine and carbamoyl phosphate: step 2/3. This chain is Argininosuccinate synthase, found in Roseiflexus castenholzii (strain DSM 13941 / HLO8).